The following is a 160-amino-acid chain: Inorganic pyrophosphatase (160 aa).

Substrate contacts are provided by Lys16, Arg28, and Tyr40. Positions 50, 55, and 87 each coordinate Mg(2+). A substrate-binding site is contributed by Tyr126.

It belongs to the PPase family. In terms of assembly, homohexamer. Mg(2+) serves as cofactor.

It is found in the cytoplasm. The catalysed reaction is diphosphate + H2O = 2 phosphate + H(+). In terms of biological role, catalyzes the hydrolysis of inorganic pyrophosphate (PPi) forming two phosphate ions. This chain is Inorganic pyrophosphatase, found in Nanoarchaeum equitans (strain Kin4-M).